Reading from the N-terminus, the 642-residue chain is Threonine--tRNA ligase (642 aa).

Residues M1–T61 enclose the TGS domain. The tract at residues D243–P534 is catalytic. 3 residues coordinate Zn(2+): C334, H385, and H511.

The protein belongs to the class-II aminoacyl-tRNA synthetase family. As to quaternary structure, homodimer. Zn(2+) is required as a cofactor.

It localises to the cytoplasm. It carries out the reaction tRNA(Thr) + L-threonine + ATP = L-threonyl-tRNA(Thr) + AMP + diphosphate + H(+). Functionally, catalyzes the attachment of threonine to tRNA(Thr) in a two-step reaction: L-threonine is first activated by ATP to form Thr-AMP and then transferred to the acceptor end of tRNA(Thr). Also edits incorrectly charged L-seryl-tRNA(Thr). The chain is Threonine--tRNA ligase from Shewanella sediminis (strain HAW-EB3).